Consider the following 92-residue polypeptide: Large ribosomal subunit protein bL25 (92 aa).

It belongs to the bacterial ribosomal protein bL25 family. In terms of assembly, part of the 50S ribosomal subunit; part of the 5S rRNA/L5/L18/L25 subcomplex. Contacts the 5S rRNA. Binds to the 5S rRNA independently of L5 and L18.

This is one of the proteins that binds to the 5S RNA in the ribosome where it forms part of the central protuberance. The chain is Large ribosomal subunit protein bL25 from Vibrio parahaemolyticus serotype O3:K6 (strain RIMD 2210633).